Here is a 31-residue protein sequence, read N- to C-terminus: Cytochrome b6-f complex subunit 6 (31 aa).

A helical membrane pass occupies residues 4-24 (VVSYLGILAAFALVTIGIFLV).

Belongs to the PetL family. As to quaternary structure, the 4 large subunits of the cytochrome b6-f complex are cytochrome b6, subunit IV (17 kDa polypeptide, PetD), cytochrome f and the Rieske protein, while the 4 small subunits are PetG, PetL, PetM and PetN. The complex functions as a dimer.

It localises to the plastid. It is found in the chloroplast thylakoid membrane. Component of the cytochrome b6-f complex, which mediates electron transfer between photosystem II (PSII) and photosystem I (PSI), cyclic electron flow around PSI, and state transitions. PetL is important for photoautotrophic growth as well as for electron transfer efficiency and stability of the cytochrome b6-f complex. This Mesostigma viride (Green alga) protein is Cytochrome b6-f complex subunit 6.